The following is a 72-amino-acid chain: Translation initiation factor IF-1 (72 aa).

In terms of domain architecture, S1-like spans 1 to 72 (MPKEEVLEFP…TKGRITYRFK (72 aa)).

The protein belongs to the IF-1 family. Component of the 30S ribosomal translation pre-initiation complex which assembles on the 30S ribosome in the order IF-2 and IF-3, IF-1 and N-formylmethionyl-tRNA(fMet); mRNA recruitment can occur at any time during PIC assembly.

The protein localises to the cytoplasm. One of the essential components for the initiation of protein synthesis. Stabilizes the binding of IF-2 and IF-3 on the 30S subunit to which N-formylmethionyl-tRNA(fMet) subsequently binds. Helps modulate mRNA selection, yielding the 30S pre-initiation complex (PIC). Upon addition of the 50S ribosomal subunit IF-1, IF-2 and IF-3 are released leaving the mature 70S translation initiation complex. This Chelativorans sp. (strain BNC1) protein is Translation initiation factor IF-1.